The primary structure comprises 320 residues: Ferrochelatase (320 aa).

2 residues coordinate Fe cation: histidine 194 and glutamate 275.

Belongs to the ferrochelatase family. As to quaternary structure, monomer.

It is found in the cytoplasm. It carries out the reaction heme b + 2 H(+) = protoporphyrin IX + Fe(2+). It participates in porphyrin-containing compound metabolism; protoheme biosynthesis; protoheme from protoporphyrin-IX: step 1/1. Its function is as follows. Catalyzes the ferrous insertion into protoporphyrin IX. This is Ferrochelatase from Escherichia coli O45:K1 (strain S88 / ExPEC).